Consider the following 321-residue polypeptide: Coproporphyrin III ferrochelatase (321 aa).

Positions 185 and 267 each coordinate Fe(2+).

It belongs to the ferrochelatase family.

The protein localises to the cytoplasm. It carries out the reaction Fe-coproporphyrin III + 2 H(+) = coproporphyrin III + Fe(2+). Its pathway is porphyrin-containing compound metabolism; protoheme biosynthesis. Involved in coproporphyrin-dependent heme b biosynthesis. Catalyzes the insertion of ferrous iron into coproporphyrin III to form Fe-coproporphyrin III. This chain is Coproporphyrin III ferrochelatase, found in Lacticaseibacillus casei (strain BL23) (Lactobacillus casei).